Reading from the N-terminus, the 638-residue chain is RAF proto-oncogene serine/threonine-protein kinase (638 aa).

S43 is modified (phosphoserine). Residues 56–130 (STMRVYLPNK…VGAELQVDFL (75 aa)) form the RBD domain. The segment at 137–183 (THNFVRKTFLKLAFCDICQKFLLNAFRCQTCGYKFHEHCSTKVPTMC) adopts a Phorbol-ester/DAG-type zinc-finger fold. Zn(2+) is bound by residues H138, C151, C154, C164, C167, H172, C175, and C183. At S257 the chain carries Phosphoserine. Phosphothreonine; by autocatalysis is present on T266. The disordered stretch occupies residues 279 to 323 (LRSHSESGSPNNLSPTGWSNAKAPAPTHREKAASSTGQEKNKIRA). Polar residues predominate over residues 284 to 297 (ESGSPNNLSPTGWS). S329 is modified (phosphoserine). Residues 340–600 (VMLSSRIGSG…PQILSSIELL (261 aa)) enclose the Protein kinase domain. Residues 346 to 354 (IGSGSFGTV) and K366 contribute to the ATP site. D459 acts as the Proton acceptor in catalysis. S490 bears the Phosphoserine mark.

Belongs to the protein kinase superfamily. TKL Ser/Thr protein kinase family. RAF subfamily. Zn(2+) is required as a cofactor. Post-translationally, phosphorylation at Ser-257 inactivates kinase activity. Dephosphorylation of Ser-257 by a complex containing protein phosphatase 1 relieves inactivation, leading to stimulate RAF1 activity.

It is found in the cytoplasm. The protein localises to the cell membrane. The catalysed reaction is L-seryl-[protein] + ATP = O-phospho-L-seryl-[protein] + ADP + H(+). It catalyses the reaction L-threonyl-[protein] + ATP = O-phospho-L-threonyl-[protein] + ADP + H(+). Serine/threonine-protein kinase that acts as a regulatory link between the membrane-associated Ras GTPases and the MAPK/ERK cascade, and this critical regulatory link functions as a switch determining cell fate decisions. RAF1 activation initiates a mitogen-activated protein kinase (MAPK) cascade that comprises a sequential phosphorylation of the dual-specific MAPK kinases (MAP2K1/MEK1 and MAP2K2/MEK2) and the extracellular signal-regulated kinases (MAPK3/ERK1 and MAPK1/ERK2). In Xenopus laevis (African clawed frog), this protein is RAF proto-oncogene serine/threonine-protein kinase (raf1).